The primary structure comprises 617 residues: Glutamyl-tRNA(Gln) amidotransferase subunit E (617 aa).

It belongs to the GatB/GatE family. GatE subfamily. In terms of assembly, heterodimer of GatD and GatE.

The enzyme catalyses L-glutamyl-tRNA(Gln) + L-glutamine + ATP + H2O = L-glutaminyl-tRNA(Gln) + L-glutamate + ADP + phosphate + H(+). Functionally, allows the formation of correctly charged Gln-tRNA(Gln) through the transamidation of misacylated Glu-tRNA(Gln) in organisms which lack glutaminyl-tRNA synthetase. The reaction takes place in the presence of glutamine and ATP through an activated gamma-phospho-Glu-tRNA(Gln). The GatDE system is specific for glutamate and does not act on aspartate. In Natronomonas pharaonis (strain ATCC 35678 / DSM 2160 / CIP 103997 / JCM 8858 / NBRC 14720 / NCIMB 2260 / Gabara) (Halobacterium pharaonis), this protein is Glutamyl-tRNA(Gln) amidotransferase subunit E.